A 96-amino-acid chain; its full sequence is Large ribosomal subunit protein bL27 (96 aa).

Positions 1–9 (MLRLDLQFF) are excised as a propeptide. Residues 1–36 (MLRLDLQFFSTKKGQGSSKNGRDSESKRLGSKRADG) form a disordered region. Positions 8–19 (FFSTKKGQGSSK) are enriched in polar residues. The span at 20–35 (NGRDSESKRLGSKRAD) shows a compositional bias: basic and acidic residues.

The protein belongs to the bacterial ribosomal protein bL27 family. Post-translationally, the N-terminus is cleaved by ribosomal processing cysteine protease Prp.

This chain is Large ribosomal subunit protein bL27, found in Oceanobacillus iheyensis (strain DSM 14371 / CIP 107618 / JCM 11309 / KCTC 3954 / HTE831).